The sequence spans 70 residues: Large ribosomal subunit protein bL31 (70 aa).

Cys-16, Cys-18, Cys-37, and Cys-40 together coordinate Zn(2+).

This sequence belongs to the bacterial ribosomal protein bL31 family. Type A subfamily. Part of the 50S ribosomal subunit. Zn(2+) is required as a cofactor.

In terms of biological role, binds the 23S rRNA. The chain is Large ribosomal subunit protein bL31 from Pasteurella multocida (strain Pm70).